A 736-amino-acid chain; its full sequence is Phosphoribosylformylglycinamidine synthase subunit PurL (736 aa).

Residue histidine 50 is part of the active site. ATP is bound by residues tyrosine 53 and lysine 92. Mg(2+) is bound at residue glutamate 94. Substrate is bound by residues 95 to 98 and arginine 117; that span reads SHNH. The active-site Proton acceptor is histidine 96. Mg(2+) is bound at residue aspartate 118. Glutamine 241 contacts substrate. Residue aspartate 269 coordinates Mg(2+). 313 to 315 lines the substrate pocket; the sequence is ESQ. ATP-binding residues include aspartate 495 and glycine 532. Residue asparagine 533 coordinates Mg(2+). Serine 535 contributes to the substrate binding site.

This sequence belongs to the FGAMS family. In terms of assembly, monomer. Part of the FGAM synthase complex composed of 1 PurL, 1 PurQ and 2 PurS subunits.

The protein localises to the cytoplasm. The enzyme catalyses N(2)-formyl-N(1)-(5-phospho-beta-D-ribosyl)glycinamide + L-glutamine + ATP + H2O = 2-formamido-N(1)-(5-O-phospho-beta-D-ribosyl)acetamidine + L-glutamate + ADP + phosphate + H(+). The protein operates within purine metabolism; IMP biosynthesis via de novo pathway; 5-amino-1-(5-phospho-D-ribosyl)imidazole from N(2)-formyl-N(1)-(5-phospho-D-ribosyl)glycinamide: step 1/2. In terms of biological role, part of the phosphoribosylformylglycinamidine synthase complex involved in the purines biosynthetic pathway. Catalyzes the ATP-dependent conversion of formylglycinamide ribonucleotide (FGAR) and glutamine to yield formylglycinamidine ribonucleotide (FGAM) and glutamate. The FGAM synthase complex is composed of three subunits. PurQ produces an ammonia molecule by converting glutamine to glutamate. PurL transfers the ammonia molecule to FGAR to form FGAM in an ATP-dependent manner. PurS interacts with PurQ and PurL and is thought to assist in the transfer of the ammonia molecule from PurQ to PurL. The polypeptide is Phosphoribosylformylglycinamidine synthase subunit PurL (Bartonella tribocorum (strain CIP 105476 / IBS 506)).